Consider the following 244-residue polypeptide: NAD(P)H-quinone oxidoreductase subunit K (244 aa).

[4Fe-4S] cluster contacts are provided by C60, C61, C125, and C156. The span at 221–236 (SKKEKITELPENREQT) shows a compositional bias: basic and acidic residues. The interval 221 to 244 (SKKEKITELPENREQTEIINSEEE) is disordered.

Belongs to the complex I 20 kDa subunit family. NDH-1 can be composed of about 15 different subunits; different subcomplexes with different compositions have been identified which probably have different functions. [4Fe-4S] cluster serves as cofactor.

The protein localises to the cellular thylakoid membrane. The enzyme catalyses a plastoquinone + NADH + (n+1) H(+)(in) = a plastoquinol + NAD(+) + n H(+)(out). It catalyses the reaction a plastoquinone + NADPH + (n+1) H(+)(in) = a plastoquinol + NADP(+) + n H(+)(out). Functionally, NDH-1 shuttles electrons from an unknown electron donor, via FMN and iron-sulfur (Fe-S) centers, to quinones in the respiratory and/or the photosynthetic chain. The immediate electron acceptor for the enzyme in this species is believed to be plastoquinone. Couples the redox reaction to proton translocation, and thus conserves the redox energy in a proton gradient. Cyanobacterial NDH-1 also plays a role in inorganic carbon-concentration. This is NAD(P)H-quinone oxidoreductase subunit K from Prochlorococcus marinus (strain MIT 9312).